The chain runs to 641 residues: Macrolide export ATP-binding/permease protein MacB (641 aa).

An ABC transporter domain is found at 2 to 236; sequence IFLKNICKNI…LTLKTMSKEK (235 aa). 34-41 contacts ATP; the sequence is GQSGSGKT. The next 4 helical transmembrane spans lie at 265–285, 519–539, 571–591, and 604–624; these read ILTMLGIIIGIASVVCVVALG, ACVAVIALIVGGIGVMNIMLV, MICTIGAILGVILSIFVIFAF, and AYSVLLGLLSSMFIGVVFGFF.

Belongs to the ABC transporter superfamily. Macrolide exporter (TC 3.A.1.122) family. In terms of assembly, homodimer.

Its subcellular location is the cell inner membrane. Functionally, non-canonical ABC transporter that contains transmembrane domains (TMD), which form a pore in the inner membrane, and an ATP-binding domain (NBD), which is responsible for energy generation. Confers resistance against macrolides. This chain is Macrolide export ATP-binding/permease protein MacB, found in Campylobacter jejuni subsp. jejuni serotype O:23/36 (strain 81-176).